Here is a 990-residue protein sequence, read N- to C-terminus: Insulin-degrading enzyme (990 aa).

His-81 contributes to the Zn(2+) binding site. The active-site Proton acceptor is the Glu-84. Zn(2+)-binding residues include His-85 and Glu-162.

This sequence belongs to the peptidase M16 family. Zn(2+) is required as a cofactor.

The enzyme catalyses Degradation of insulin, glucagon and other polypeptides. No action on proteins.. Its function is as follows. Can cleave insulin and TGF-alpha. This Drosophila melanogaster (Fruit fly) protein is Insulin-degrading enzyme (Ide).